A 556-amino-acid polypeptide reads, in one-letter code: Bifunctional methyltransferase (556 aa).

The RF MTase stretch occupies residues 1 to 310 (MQYSIQKFLN…NRVIEISLIQ (310 aa)). Residues 148–152 (GTGSG), aspartate 171, tryptophan 200, and asparagine 215 contribute to the S-adenosyl-L-methionine site. 215-218 (NPPY) is a binding site for substrate. The tract at residues 313-556 (RSYARRIGKS…IITKIPPKSY (244 aa)) is tRNA MTase. Positions 348–399 (KNYNSCKIKSNYTKFNLEKSKESVSRGAERIKIREHLRTYKEDVANFSSSTS) are insert. Glutamate 403, glutamate 428, asparagine 455, and aspartate 477 together coordinate S-adenosyl-L-methionine. Residue aspartate 477 is part of the active site. 2 residues coordinate substrate: lysine 481 and aspartate 513.

It in the C-terminal section; belongs to the class I-like SAM-binding methyltransferase superfamily. TrmB family. This sequence in the N-terminal section; belongs to the protein N5-glutamine methyltransferase family. PrmC subfamily.

It catalyses the reaction L-glutaminyl-[peptide chain release factor] + S-adenosyl-L-methionine = N(5)-methyl-L-glutaminyl-[peptide chain release factor] + S-adenosyl-L-homocysteine + H(+). It carries out the reaction guanosine(46) in tRNA + S-adenosyl-L-methionine = N(7)-methylguanosine(46) in tRNA + S-adenosyl-L-homocysteine. Functionally, methylates the class 1 translation termination release factors RF1/PrfA and RF2/PrfB on the glutamine residue of the universally conserved GGQ motif. Catalyzes the formation of N(7)-methylguanine at position 46 (m7G46) in tRNA. The protein is Bifunctional methyltransferase (prmC/trmB) of Rickettsia bellii (strain RML369-C).